We begin with the raw amino-acid sequence, 902 residues long: Glutamate receptor 4 (902 aa).

The N-terminal stretch at 1 to 20 (MRIICRQIVLLFSGFWGLAM) is a signal peptide. Topologically, residues 22-544 (AFPSSVQIGG…GVFSFLDPLA (523 aa)) are extracellular. Residues N52, N56, N258, N371, N407, and N414 are each glycosylated (N-linked (GlcNAc...) asparagine). Residues C84 and C331 are joined by a disulfide bond. L-glutamate contacts are provided by P500, T502, and R507. The helical transmembrane segment at 545–565 (YEIWMCIVFAYIGVSVVLFLV) threads the bilayer. Residues 566–592 (SRFSPYEWHTEEPEDGKEGPSDQPPNE) lie on the Cytoplasmic side of the membrane. The helical; Pore-forming intramembrane region spans 593 to 608 (FGIFNSLWFSLGAFMQ). The stretch at 609–611 (QGC) is an intramembrane region. The S-palmitoyl cysteine moiety is linked to residue C611. Residues 612–617 (DISPRS) are Cytoplasmic-facing. The helical transmembrane segment at 618-638 (LSGRIVGGVWWFFTLIIISSY) threads the bilayer. The Extracellular segment spans residues 639–813 (TANLAAFLTV…DKTSALSLSN (175 aa)). S676, T677, and E727 together coordinate L-glutamate. C740 and C795 are disulfide-bonded. Residues 814-834 (VAGVFYILVGGLGLAMLVALI) traverse the membrane as a helical segment. At 835 to 902 (EFCYKSRAEA…GLAVIASDLP (68 aa)) the chain is on the cytoplasmic side. Residue C837 is the site of S-palmitoyl cysteine attachment. The residue at position 862 (S862) is a Phosphoserine.

It belongs to the glutamate-gated ion channel (TC 1.A.10.1) family. GRIA4 subfamily. Homotetramer or heterotetramer of pore-forming glutamate receptor subunits. Tetramers may be formed by the dimerization of dimers. Interacts with EPB41L1 via its C-terminus. Isoform 3 interacts with PICK1. Found in a complex with GRIA1, GRIA2, GRIA3, CNIH2, CNIH3, CACNG2, CACNG3, CACNG4, CACNG5, CACNG7 and CACNG8. Interacts with CACNG5 and PRKCG. Found in a complex with GRIA1, GRIA2, GRIA3, DLG4, CACNG8 and CNIH2. In terms of processing, palmitoylated. Depalmitoylated upon L-glutamate stimulation. ZDHHC3/GODZ specifically palmitoylates Cys-611, which leads to Golgi retention and decreased cell surface expression. In contrast, Cys-837 palmitoylation does not affect cell surface expression but regulates stimulation-dependent endocytosis. Post-translationally, phosphorylated at Ser-862 by PRKCG; phosphorylation increases plasma membrane-associated GRI4 expression.

Its subcellular location is the cell membrane. The protein resides in the postsynaptic cell membrane. It is found in the cell projection. The protein localises to the dendrite. It carries out the reaction Ca(2+)(in) = Ca(2+)(out). The catalysed reaction is Na(+)(in) = Na(+)(out). The enzyme catalyses Mg(2+)(in) = Mg(2+)(out). Its function is as follows. Ionotropic glutamate receptor that functions as a ligand-gated cation channel, gated by L-glutamate and glutamatergic agonists such as alpha-amino-3-hydroxy-5-methyl-4-isoxazolepropionic acid (AMPA), quisqualic acid, and kainic acid. L-glutamate acts as an excitatory neurotransmitter at many synapses in the central nervous system and plays an important role in fast excitatory synaptic transmission. Binding of the excitatory neurotransmitter L-glutamate induces a conformation change, leading to the opening of the cation channel, and thereby converts the chemical signal to an electrical impulse upon entry of monovalent and divalent cations such as sodium and calcium. The receptor then desensitizes rapidly and enters a transient inactive state, characterized by the presence of bound agonist. In the presence of CACNG8, shows resensitization which is characterized by a delayed accumulation of current flux upon continued application of L-glutamate. The chain is Glutamate receptor 4 from Mus musculus (Mouse).